The following is a 131-amino-acid chain: D-ribose pyranase (131 aa).

Catalysis depends on histidine 20, which acts as the Proton donor. Substrate-binding positions include aspartate 28, histidine 98, and 120 to 122; that span reads YAN.

It belongs to the RbsD / FucU family. RbsD subfamily. Homodecamer.

The protein localises to the cytoplasm. The enzyme catalyses beta-D-ribopyranose = beta-D-ribofuranose. Its pathway is carbohydrate metabolism; D-ribose degradation; D-ribose 5-phosphate from beta-D-ribopyranose: step 1/2. Its function is as follows. Catalyzes the interconversion of beta-pyran and beta-furan forms of D-ribose. The chain is D-ribose pyranase from Bacillus cereus (strain 03BB102).